The sequence spans 443 residues: CBL-interacting protein kinase 2 (443 aa).

Positions 13-267 (YEMGKLLGQG…MDKIMENPWF (255 aa)) constitute a Protein kinase domain. ATP is bound by residues 19 to 27 (LGQGTFAKV) and Lys42. Asp135 serves as the catalytic Proton acceptor. The tract at residues 153–182 (DFGLSALADCKRQDGLLHTTCGTPAYVAPE) is activation loop. The NAF domain maps to 302–329 (TLEKKPSNLNAFDIISLSTGLDLSGMFE). The segment at 333–362 (KKESKFTSTSTASTIISKIEDIAKGLRLKL) is PPI.

This sequence belongs to the protein kinase superfamily. CAMK Ser/Thr protein kinase family. SNF1 subfamily. It depends on Mn(2+) as a cofactor.

The catalysed reaction is L-seryl-[protein] + ATP = O-phospho-L-seryl-[protein] + ADP + H(+). It catalyses the reaction L-threonyl-[protein] + ATP = O-phospho-L-threonyl-[protein] + ADP + H(+). CIPK serine-threonine protein kinases interact with CBL proteins. Binding of a CBL protein to the regulatory NAF domain of CIPK protein lead to the activation of the kinase in a calcium-dependent manner. The chain is CBL-interacting protein kinase 2 (CIPK2) from Oryza sativa subsp. japonica (Rice).